The chain runs to 140 residues: Large ribosomal subunit protein uL22c (140 aa).

It belongs to the universal ribosomal protein uL22 family. As to quaternary structure, part of the 50S ribosomal subunit.

The protein resides in the plastid. The protein localises to the chloroplast. In terms of biological role, this protein binds specifically to 23S rRNA. The globular domain of the protein is located near the polypeptide exit tunnel on the outside of the subunit, while an extended beta-hairpin is found that lines the wall of the exit tunnel in the center of the 70S ribosome. The protein is Large ribosomal subunit protein uL22c (rpl22) of Calycanthus floridus var. glaucus (Eastern sweetshrub).